Here is a 786-residue protein sequence, read N- to C-terminus: Digalactosyldiacylglycerol synthase 1, chloroplastic (786 aa).

A chloroplast-targeting transit peptide spans 1-25; it reads MASQRQPPSSSNAFSFLSKGWREVR.

The protein belongs to the glycosyltransferase group 1 family. Glycosyltransferase 4 subfamily. As to expression, high expression in nodules infected cells, but low in nodule inner cortex and root central cylinder.

The protein resides in the plastid. The protein localises to the chloroplast outer membrane. It localises to the plastid outer membrane. It catalyses the reaction a 1,2-diacyl-3-O-(beta-D-galactosyl)-sn-glycerol + UDP-alpha-D-galactose = a 1,2-diacyl-3-O-[alpha-D-galactosyl-(1-&gt;6)-beta-D-galactosyl]-sn-glycerol + UDP + H(+). Involved in the synthesis of diacylglycerol galactolipids that are specifically found in thylakoid and in nodule peribacteroid membranes. Specific for alpha-glycosidic linkages. In Lotus japonicus (Lotus corniculatus var. japonicus), this protein is Digalactosyldiacylglycerol synthase 1, chloroplastic.